The primary structure comprises 365 residues: Ferrochelatase (365 aa).

Fe cation is bound by residues His-211 and Glu-292.

It belongs to the ferrochelatase family.

It localises to the cytoplasm. It catalyses the reaction heme b + 2 H(+) = protoporphyrin IX + Fe(2+). It functions in the pathway porphyrin-containing compound metabolism; protoheme biosynthesis; protoheme from protoporphyrin-IX: step 1/1. Its function is as follows. Catalyzes the ferrous insertion into protoporphyrin IX. The sequence is that of Ferrochelatase from Aromatoleum aromaticum (strain DSM 19018 / LMG 30748 / EbN1) (Azoarcus sp. (strain EbN1)).